The sequence spans 602 residues: Type II restriction enzyme StsI (602 aa).

The enzyme catalyses Endonucleolytic cleavage of DNA to give specific double-stranded fragments with terminal 5'-phosphates.. An S subtype restriction enzyme that recognizes the double-stranded sequences 5'-GGATG-3' and 3'-CATCC-5' and cleaves respectively 15 bases after G-1 and 14 bases before C-1. The polypeptide is Type II restriction enzyme StsI (stsIR) (Streptococcus sanguinis).